Here is a 228-residue protein sequence, read N- to C-terminus: Histone H1-III (228 aa).

The segment covering 1–18 (MSDPAPEVASAVPVASPA) has biased composition (low complexity). Disordered stretches follow at residues 1 to 44 (MSDP…PPVS) and 98 to 228 (LQTK…AKKA). Residues 39 to 113 (THPPVSEMVV…GASGSFKLPA (75 aa)) enclose the H15 domain. Residues 115–133 (AKKEKVAKTPKKAAGEKKP) are compositionally biased toward basic and acidic residues. Composition is skewed to basic residues over residues 148 to 170 (SIAK…KSTK) and 178 to 209 (AAKK…KVAA). A compositionally biased stretch (basic and acidic residues) spans 211–221 (KPAEKKPEAAK).

Belongs to the histone H1/H5 family.

Its subcellular location is the nucleus. The protein resides in the chromosome. Its function is as follows. Histones H1 are necessary for the condensation of nucleosome chains into higher-order structures. This chain is Histone H1-III, found in Glyptotendipes barbipes (Midge).